Consider the following 647-residue polypeptide: Beta-galactosidase (647 aa).

The N-terminal stretch at 1 to 24 is a signal peptide; that stretch reads MLRVPLCTPLPLLALLQLLGAAHG. A propeptide spanning residues 25-29 is cleaved from the precursor; sequence IYNVT. Asparagine 27 carries an N-linked (GlcNAc...) asparagine glycan. Substrate-binding residues include tyrosine 84, glutamate 130, and asparagine 188. Residue glutamate 189 is the Proton donor of the active site. Cysteine 196 and cysteine 231 form a disulfide bridge. Asparagine 248 carries an N-linked (GlcNAc...) asparagine glycan. The active-site Nucleophile is the glutamate 269. Residue tyrosine 334 coordinates substrate. Residues asparagine 500, asparagine 504, asparagine 510, asparagine 544, asparagine 557, and asparagine 617 are each glycosylated (N-linked (GlcNAc...) asparagine). Cysteine 628 and cysteine 636 are oxidised to a cystine.

The protein belongs to the glycosyl hydrolase 35 family. In terms of assembly, homodimer. May form higher multimers.

The protein resides in the lysosome. It catalyses the reaction Hydrolysis of terminal non-reducing beta-D-galactose residues in beta-D-galactosides.. Cleaves beta-linked terminal galactosyl residues from gangliosides, glycoproteins, and glycosaminoglycans. The chain is Beta-galactosidase (Glb1) from Mus musculus (Mouse).